Consider the following 583-residue polypeptide: Aspartate--tRNA(Asp/Asn) ligase (583 aa).

Glu-171 contacts L-aspartate. The aspartate stretch occupies residues 195–198; that stretch reads QLFK. Residue Arg-217 coordinates L-aspartate. Residues 217–219 and Gln-226 contribute to the ATP site; that span reads RDE. His-443 contacts L-aspartate. Residue Glu-476 coordinates ATP. Arg-483 provides a ligand contact to L-aspartate. 528–531 provides a ligand contact to ATP; it reads GLDR.

Belongs to the class-II aminoacyl-tRNA synthetase family. Type 1 subfamily. Homodimer.

Its subcellular location is the cytoplasm. The enzyme catalyses tRNA(Asx) + L-aspartate + ATP = L-aspartyl-tRNA(Asx) + AMP + diphosphate. Aspartyl-tRNA synthetase with relaxed tRNA specificity since it is able to aspartylate not only its cognate tRNA(Asp) but also tRNA(Asn). Reaction proceeds in two steps: L-aspartate is first activated by ATP to form Asp-AMP and then transferred to the acceptor end of tRNA(Asp/Asn). The chain is Aspartate--tRNA(Asp/Asn) ligase from Ruthia magnifica subsp. Calyptogena magnifica.